The sequence spans 157 residues: MAAPTDSLSVSGPTAVRLPRSPPIKVLAEQLRRDAEGGPGSWRLSRAAVGREPLELRAVWMQGTVVEAGGGVARLRDPSGSFSVRGLERVPRGRPCLVPGKYVMVMGVIQACSPEPCLQAVKMTDLSDNPLHESLWELEVEDLHRHIYSLDDVGTGD.

Alanine 2 carries the post-translational modification N-acetylalanine. Serine 7 carries the post-translational modification Phosphoserine. Residues 45 to 115 constitute a DNA-binding region (OB); sequence SRAAVGREPL…MGVIQACSPE (71 aa).

Belongs to the RMI2 family. As to quaternary structure, component of the RMI complex, containing at least TOP3A, RMI1 and RMI2. The RMI complex interacts with BLM. Phosphorylated during mitosis.

The protein localises to the nucleus. Essential component of the RMI complex, a complex that plays an important role in the processing of homologous recombination intermediates. It is required to regulate sister chromatid segregation and to limit DNA crossover. Essential for the stability, localization, and function of BLM, TOP3A, and complexes containing BLM. In the RMI complex, it is required to target BLM to chromatin and stress-induced nuclear foci and mitotic phosphorylation of BLM. The sequence is that of RecQ-mediated genome instability protein 2 (RMI2) from Bos taurus (Bovine).